The chain runs to 448 residues: Phosphoglucosamine mutase (448 aa).

The active-site Phosphoserine intermediate is Ser-104. 4 residues coordinate Mg(2+): Ser-104, Asp-243, Asp-245, and Asp-247. Residue Ser-104 is modified to Phosphoserine.

The protein belongs to the phosphohexose mutase family. Requires Mg(2+) as cofactor. Activated by phosphorylation.

It catalyses the reaction alpha-D-glucosamine 1-phosphate = D-glucosamine 6-phosphate. Catalyzes the conversion of glucosamine-6-phosphate to glucosamine-1-phosphate. The chain is Phosphoglucosamine mutase from Xylella fastidiosa (strain 9a5c).